The sequence spans 439 residues: tRNA modification GTPase MnmE (439 aa).

Arg24, Glu81, and Lys121 together coordinate (6S)-5-formyl-5,6,7,8-tetrahydrofolate. Residues 218 to 363 form the TrmE-type G domain; that stretch reads GFKVVIAGAP…LRDLIGRVVK (146 aa). Asn228 lines the K(+) pocket. GTP contacts are provided by residues 228-233, 247-253, and 272-275; these read NAGKSS, TDIAGTT, and DTAG. Ser232 contributes to the Mg(2+) binding site. The K(+) site is built by Thr247, Ile249, and Thr252. Thr253 contributes to the Mg(2+) binding site. Lys439 lines the (6S)-5-formyl-5,6,7,8-tetrahydrofolate pocket.

The protein belongs to the TRAFAC class TrmE-Era-EngA-EngB-Septin-like GTPase superfamily. TrmE GTPase family. In terms of assembly, homodimer. Heterotetramer of two MnmE and two MnmG subunits. K(+) serves as cofactor.

It localises to the cytoplasm. Its function is as follows. Exhibits a very high intrinsic GTPase hydrolysis rate. Involved in the addition of a carboxymethylaminomethyl (cmnm) group at the wobble position (U34) of certain tRNAs, forming tRNA-cmnm(5)s(2)U34. This chain is tRNA modification GTPase MnmE, found in Rhizobium etli (strain CIAT 652).